The chain runs to 298 residues: Tryptophan 2,3-dioxygenase (298 aa).

Substrate contacts are provided by residues 51 to 55, Tyr-113, and Arg-117; that span reads FIIQH. Residue His-240 participates in heme binding. A substrate-binding site is contributed by Thr-254.

The protein belongs to the tryptophan 2,3-dioxygenase family. As to quaternary structure, homotetramer. Heme is required as a cofactor.

It carries out the reaction L-tryptophan + O2 = N-formyl-L-kynurenine. Its pathway is amino-acid degradation; L-tryptophan degradation via kynurenine pathway; L-kynurenine from L-tryptophan: step 1/2. In terms of biological role, heme-dependent dioxygenase that catalyzes the oxidative cleavage of the L-tryptophan (L-Trp) pyrrole ring and converts L-tryptophan to N-formyl-L-kynurenine. Catalyzes the oxidative cleavage of the indole moiety. The sequence is that of Tryptophan 2,3-dioxygenase from Xanthomonas euvesicatoria pv. vesicatoria (strain 85-10) (Xanthomonas campestris pv. vesicatoria).